Here is a 320-residue protein sequence, read N- to C-terminus: MARPKIALIGAGQIGGTLAHLAAIKELGDVVLFDIAEGTPQGKALDIAQSGPSEGFDAVMKGANSYEEIAGADVCIVTAGVPRKPGMSRDDLIGINLKVMKSVGEGIKAHAPNAFVICITNPLDAMVWALQQFSGLPAEKVVGMAGVLDSARFRHFLSVEFNVSMRDVTAFVLGGHGDTMVPLVRYSTVAGIPLPDLVQMGWTTQEKLDQIVQRTRDGGAEIVGLLKTGSAFYAPATSAIEMAEAYLKDQKRLLPCAAYVDGAFGLNGMYVGVPTIIGAGGIEKIVDIKLNDDEQAMFDKSVNAVKGLVEACKGIDSSLA.

NAD(+) contacts are provided by residues 10–15 (GAGQIG) and Asp-34. Residues Arg-83 and Arg-89 each contribute to the substrate site. NAD(+)-binding positions include Asn-96 and 119–121 (ITN). Asn-121 and Arg-152 together coordinate substrate. His-176 (proton acceptor) is an active-site residue.

Belongs to the LDH/MDH superfamily. MDH type 3 family.

It catalyses the reaction (S)-malate + NAD(+) = oxaloacetate + NADH + H(+). Functionally, catalyzes the reversible oxidation of malate to oxaloacetate. The polypeptide is Malate dehydrogenase (Cereibacter sphaeroides (strain ATCC 17029 / ATH 2.4.9) (Rhodobacter sphaeroides)).